We begin with the raw amino-acid sequence, 79 residues long: Sulfur carrier protein TusA (79 aa).

Catalysis depends on C17, which acts as the Cysteine persulfide intermediate.

This sequence belongs to the sulfur carrier protein TusA family.

It is found in the cytoplasm. Functionally, sulfur carrier protein which probably makes part of a sulfur-relay system. This is Sulfur carrier protein TusA from Haemophilus ducreyi (strain 35000HP / ATCC 700724).